The following is a 226-amino-acid chain: Putative ankyrin repeat protein RF_0939 (226 aa).

ANK repeat units follow at residues valine 56–methionine 86, phenylalanine 91–glycine 120, leucine 125–glutamine 154, and serine 157–alanine 194.

This is Putative ankyrin repeat protein RF_0939 from Rickettsia felis (strain ATCC VR-1525 / URRWXCal2) (Rickettsia azadi).